We begin with the raw amino-acid sequence, 149 residues long: MRWTKSSQPRKQRKAFFNAPLHKRQKLMSATLHPELRKKFNRRSLPVRRGDMVRIMRGDFKGHEGEVVEVDLKRLRIYVEGATIERANGEKVYYPIHPSNVMIIEPNLDDPMRRKIIERSGGTPEVEAVPEKSEEEKEEKEKEEEKSEE.

The interval Arg114–Glu149 is disordered. The span at Val129–Glu149 shows a compositional bias: basic and acidic residues.

Belongs to the universal ribosomal protein uL24 family. Part of the 50S ribosomal subunit.

Its function is as follows. One of two assembly initiator proteins, it binds directly to the 5'-end of the 23S rRNA, where it nucleates assembly of the 50S subunit. Functionally, located at the polypeptide exit tunnel on the outside of the subunit. In Methanopyrus kandleri (strain AV19 / DSM 6324 / JCM 9639 / NBRC 100938), this protein is Large ribosomal subunit protein uL24.